The sequence spans 728 residues: Elongation factor 2 (728 aa).

One can recognise a tr-type G domain in the interval 18-258; sequence KFIRNIGIVA…MVIRHLPSPI (241 aa). GTP is bound by residues 27–34, 93–97, and 147–150; these read AHIDHGKT, DTPGH, and NKVD. H594 carries the post-translational modification Diphthamide.

This sequence belongs to the TRAFAC class translation factor GTPase superfamily. Classic translation factor GTPase family. EF-G/EF-2 subfamily.

It is found in the cytoplasm. Functionally, catalyzes the GTP-dependent ribosomal translocation step during translation elongation. During this step, the ribosome changes from the pre-translocational (PRE) to the post-translocational (POST) state as the newly formed A-site-bound peptidyl-tRNA and P-site-bound deacylated tRNA move to the P and E sites, respectively. Catalyzes the coordinated movement of the two tRNA molecules, the mRNA and conformational changes in the ribosome. This is Elongation factor 2 (fusA) from Archaeoglobus fulgidus (strain ATCC 49558 / DSM 4304 / JCM 9628 / NBRC 100126 / VC-16).